A 429-amino-acid chain; its full sequence is Glutamate-1-semialdehyde 2,1-aminomutase 2 (429 aa).

Residue lysine 268 is modified to N6-(pyridoxal phosphate)lysine.

It belongs to the class-III pyridoxal-phosphate-dependent aminotransferase family. HemL subfamily. Homodimer. The cofactor is pyridoxal 5'-phosphate.

It is found in the cytoplasm. It catalyses the reaction (S)-4-amino-5-oxopentanoate = 5-aminolevulinate. The protein operates within porphyrin-containing compound metabolism; protoporphyrin-IX biosynthesis; 5-aminolevulinate from L-glutamyl-tRNA(Glu): step 2/2. This Geobacillus thermodenitrificans (strain NG80-2) protein is Glutamate-1-semialdehyde 2,1-aminomutase 2.